Reading from the N-terminus, the 508-residue chain is Glycerol kinase (508 aa).

An ADP-binding site is contributed by Thr14. ATP-binding residues include Thr14, Thr15, and Ser16. Sn-glycerol 3-phosphate is bound at residue Thr14. Position 18 (Arg18) interacts with ADP. 3 residues coordinate sn-glycerol 3-phosphate: Arg84, Glu85, and Tyr136. Arg84, Glu85, and Tyr136 together coordinate glycerol. His232 carries the post-translational modification Phosphohistidine; by HPr. Asp246 contacts sn-glycerol 3-phosphate. The glycerol site is built by Asp246 and Gln247. ADP-binding residues include Thr268 and Gly311. ATP contacts are provided by Thr268, Gly311, Gln315, and Gly412. ADP contacts are provided by Gly412 and Asn416.

This sequence belongs to the FGGY kinase family. Homotetramer and homodimer (in equilibrium). Post-translationally, the phosphoenolpyruvate-dependent sugar phosphotransferase system (PTS), including enzyme I, and histidine-containing protein (HPr) are required for the phosphorylation, which leads to the activation of the enzyme.

The catalysed reaction is glycerol + ATP = sn-glycerol 3-phosphate + ADP + H(+). Its pathway is polyol metabolism; glycerol degradation via glycerol kinase pathway; sn-glycerol 3-phosphate from glycerol: step 1/1. With respect to regulation, activated by phosphorylation and inhibited by fructose 1,6-bisphosphate (FBP). Key enzyme in the regulation of glycerol uptake and metabolism. Catalyzes the phosphorylation of glycerol to yield sn-glycerol 3-phosphate. This chain is Glycerol kinase, found in Streptococcus pyogenes serotype M18 (strain MGAS8232).